A 137-amino-acid polypeptide reads, in one-letter code: Small ribosomal subunit protein bS16m (137 aa).

A mitochondrion-targeting transit peptide spans 1-34 (MVHLTTLLCKAYRGGHLTIRLALGGCTNRPFYRI). Threonine 130 carries the post-translational modification Phosphothreonine.

The protein belongs to the bacterial ribosomal protein bS16 family. Component of the mitochondrial ribosome small subunit (28S) which comprises a 12S rRNA and about 30 distinct proteins.

The protein localises to the mitochondrion. This Pongo abelii (Sumatran orangutan) protein is Small ribosomal subunit protein bS16m (MRPS16).